Reading from the N-terminus, the 231-residue chain is ATP-dependent dethiobiotin synthetase BioD (231 aa).

12-17 (EVGKTV) contacts ATP. Thr-16 serves as a coordination point for Mg(2+). Lys-37 is an active-site residue. Residue Ser-41 coordinates substrate. Residues Asp-51, 112–115 (EGAG), and 202–204 (PKL) each bind ATP. Mg(2+) contacts are provided by Asp-51 and Glu-112.

It belongs to the dethiobiotin synthetase family. Homodimer. Mg(2+) is required as a cofactor.

The protein resides in the cytoplasm. It carries out the reaction (7R,8S)-7,8-diammoniononanoate + CO2 + ATP = (4R,5S)-dethiobiotin + ADP + phosphate + 3 H(+). It functions in the pathway cofactor biosynthesis; biotin biosynthesis; biotin from 7,8-diaminononanoate: step 1/2. Its function is as follows. Catalyzes a mechanistically unusual reaction, the ATP-dependent insertion of CO2 between the N7 and N8 nitrogen atoms of 7,8-diaminopelargonic acid (DAPA, also called 7,8-diammoniononanoate) to form a ureido ring. This chain is ATP-dependent dethiobiotin synthetase BioD, found in Bacillus subtilis (strain 168).